The primary structure comprises 92 residues: Small ribosomal subunit protein uS19 (92 aa).

The protein belongs to the universal ribosomal protein uS19 family.

In terms of biological role, protein S19 forms a complex with S13 that binds strongly to the 16S ribosomal RNA. This is Small ribosomal subunit protein uS19 from Pelobacter propionicus (strain DSM 2379 / NBRC 103807 / OttBd1).